Reading from the N-terminus, the 140-residue chain is Phospholipase A2 (140 aa).

A signal peptide spans 1–21 (MNPAHLLVLAAVCISLSGASS). The propeptide occupies 22–27 (IAPQPL). Cystine bridges form between Cys38–Cys97, Cys52–Cys139, Cys54–Cys70, Cys69–Cys125, Cys76–Cys118, Cys86–Cys111, and Cys104–Cys116. Asn39 carries an N-linked (GlcNAc...) asparagine glycan. Positions 53, 55, and 57 each coordinate Ca(2+). Residue His73 is part of the active site. Asp74 provides a ligand contact to Ca(2+). Asn107 carries N-linked (GlcNAc...) asparagine glycosylation. The active site involves Asp119.

The protein belongs to the phospholipase A2 family. Group I subfamily. D49 sub-subfamily. Ca(2+) serves as cofactor. Expressed by the venom gland.

It localises to the secreted. It catalyses the reaction a 1,2-diacyl-sn-glycero-3-phosphocholine + H2O = a 1-acyl-sn-glycero-3-phosphocholine + a fatty acid + H(+). In terms of biological role, PLA2 catalyzes the calcium-dependent hydrolysis of the 2-acyl groups in 3-sn-phosphoglycerides. In Micrurus altirostris (Uruguayan coral snake), this protein is Phospholipase A2.